Consider the following 496-residue polypeptide: Probable serine/threonine-protein kinase DDB_G0284251 (496 aa).

The segment covering 1 to 13 (MIEINNNHNNGNG) has biased composition (low complexity). A disordered region spans residues 1–25 (MIEINNNHNNGNGKQFPSSQIMPDS). Residues 36–288 (YTLGEKIGRG…AQELLQHPIF (253 aa)) enclose the Protein kinase domain. ATP contacts are provided by residues 42-50 (IGRGAFGQV) and Lys-65. Residue Asp-158 is the Proton acceptor of the active site. Residues 323–345 (DWGSSSSTSGSSTPLSSSSSSSN) are disordered. The stretch at 353 to 386 (EDFNKLQTTIKQQAQTISNLSEEILILKKELKEK) forms a coiled coil. The segment at 454 to 496 (PQLTPSSSRENISLSNSSSSIPNPNQNQNQNNKSKSKKFGFFS) is disordered. Over residues 458–486 (PSSSRENISLSNSSSSIPNPNQNQNQNNK) the composition is skewed to low complexity. Basic residues predominate over residues 487-496 (SKSKKFGFFS).

Belongs to the protein kinase superfamily. STE Ser/Thr protein kinase family. Requires Mg(2+) as cofactor.

It catalyses the reaction L-seryl-[protein] + ATP = O-phospho-L-seryl-[protein] + ADP + H(+). The enzyme catalyses L-threonyl-[protein] + ATP = O-phospho-L-threonyl-[protein] + ADP + H(+). This Dictyostelium discoideum (Social amoeba) protein is Probable serine/threonine-protein kinase DDB_G0284251.